A 498-amino-acid chain; its full sequence is Neoxanthin synthase, chloroplastic (498 aa).

Residues 1–42 (METLLKPFPSLLLSSPTPYRSIVQQNPSFLSPTTKKKSRKCL) constitute a chloroplast transit peptide.

Belongs to the lycopene cyclase family. In terms of tissue distribution, expressed exclusively in chromoplast-containing tissues of flowers and fruits. Expressed in preanthesis flowers.

It is found in the plastid. The protein localises to the chloroplast. It carries out the reaction all-trans-violaxanthin = all-trans-neoxanthin. The enzyme catalyses a carotenoid psi-end group = a carotenoid beta-end derivative. It participates in carotenoid biosynthesis; neoxanthin biosynthesis. It functions in the pathway carotenoid biosynthesis; beta-carotene biosynthesis. Functionally, involved in the synthesis of neoxanthin, the last product of carotenoid synthesis and a precursor of abscisic acid. Involved in the beta-carotene biosynthesis. This Solanum lycopersicum (Tomato) protein is Neoxanthin synthase, chloroplastic.